A 253-amino-acid chain; its full sequence is Demethylmenaquinone methyltransferase (253 aa).

S-adenosyl-L-methionine contacts are provided by residues T62, D80, 102–103, and S119; that span reads DA.

Belongs to the class I-like SAM-binding methyltransferase superfamily. MenG/UbiE family.

The catalysed reaction is a 2-demethylmenaquinol + S-adenosyl-L-methionine = a menaquinol + S-adenosyl-L-homocysteine + H(+). It participates in quinol/quinone metabolism; menaquinone biosynthesis; menaquinol from 1,4-dihydroxy-2-naphthoate: step 2/2. In terms of biological role, methyltransferase required for the conversion of demethylmenaquinol (DMKH2) to menaquinol (MKH2). The polypeptide is Demethylmenaquinone methyltransferase (Paenarthrobacter aurescens (strain TC1)).